A 355-amino-acid chain; its full sequence is Anthranilate phosphoribosyltransferase (355 aa).

5-phospho-alpha-D-ribose 1-diphosphate is bound by residues Gly85, 88–89 (GD), Thr93, 95–98 (NIST), 113–121 (KHGNRAASS), and Ser125. Position 85 (Gly85) interacts with anthranilate. Ser97 contacts Mg(2+). Anthranilate is bound at residue Asn116. Residue Arg171 participates in anthranilate binding. 2 residues coordinate Mg(2+): Asp229 and Glu230.

This sequence belongs to the anthranilate phosphoribosyltransferase family. Homodimer. Mg(2+) is required as a cofactor.

The enzyme catalyses N-(5-phospho-beta-D-ribosyl)anthranilate + diphosphate = 5-phospho-alpha-D-ribose 1-diphosphate + anthranilate. It participates in amino-acid biosynthesis; L-tryptophan biosynthesis; L-tryptophan from chorismate: step 2/5. Its function is as follows. Catalyzes the transfer of the phosphoribosyl group of 5-phosphorylribose-1-pyrophosphate (PRPP) to anthranilate to yield N-(5'-phosphoribosyl)-anthranilate (PRA). This chain is Anthranilate phosphoribosyltransferase, found in Acidothermus cellulolyticus (strain ATCC 43068 / DSM 8971 / 11B).